The sequence spans 382 residues: Membrane protein MLC1 (382 aa).

Over residues Met1–Arg28 the composition is skewed to basic and acidic residues. The disordered stretch occupies residues Met1–Leu43. Helical transmembrane passes span Trp58 to Leu78, Tyr88 to Gly107, Phe117 to Cys137, and Ile148 to Ile168. Ser183, Ser185, and Ser188 each carry phosphoserine. Helical transmembrane passes span Ser205–Val225, Leu234–Val254, Leu263–Gly283, and Leu309–Ile329.

In terms of assembly, interacts with ATP1B1. Part of a complex containing ATP1B1, TRPV4, AQP4 and HEPACAM.

It localises to the membrane. Its subcellular location is the cell membrane. The protein resides in the cytoplasm. It is found in the perinuclear region. The protein localises to the endoplasmic reticulum. Functionally, transmembrane protein mainly expressed in brain astrocytes that may play a role in transport across the blood-brain and brain-cerebrospinal fluid barriers. Regulates the response of astrocytes to hypo-osmosis by promoting calcium influx. May function as regulatory protein of membrane protein complexes such as ion channels. The chain is Membrane protein MLC1 from Mus musculus (Mouse).